The primary structure comprises 354 residues: Methylthioribose-1-phosphate isomerase (354 aa).

Substrate-binding positions include 48–50 (RGA), R95, and Q202. D243 acts as the Proton donor in catalysis. 253–254 (NK) provides a ligand contact to substrate.

Belongs to the eIF-2B alpha/beta/delta subunits family. MtnA subfamily.

It catalyses the reaction 5-(methylsulfanyl)-alpha-D-ribose 1-phosphate = 5-(methylsulfanyl)-D-ribulose 1-phosphate. The protein operates within amino-acid biosynthesis; L-methionine biosynthesis via salvage pathway; L-methionine from S-methyl-5-thio-alpha-D-ribose 1-phosphate: step 1/6. Catalyzes the interconversion of methylthioribose-1-phosphate (MTR-1-P) into methylthioribulose-1-phosphate (MTRu-1-P). This is Methylthioribose-1-phosphate isomerase from Roseiflexus castenholzii (strain DSM 13941 / HLO8).